Here is a 413-residue protein sequence, read N- to C-terminus: Eukaryotic initiation factor 4A-14 (413 aa).

Positions 40–68 (DSFDAMGLQENLLRGIYAYGFEKPSAIQQ) match the Q motif motif. The 171-residue stretch at 71-241 (IVPFCKGLDV…RKFMSKPVRI (171 aa)) folds into the Helicase ATP-binding domain. Position 84–91 (84–91 (AQSGTGKT)) interacts with ATP. The DEAD box signature appears at 189-192 (DEAD). The Helicase C-terminal domain maps to 252–413 (GIKQFYVNVD…ELPANVADLL (162 aa)).

It belongs to the DEAD box helicase family. eIF4A subfamily. EIF4F is a multi-subunit complex, the composition of which varies with external and internal environmental conditions. It is composed of at least EIF4A, EIF4E and EIF4G.

It carries out the reaction ATP + H2O = ADP + phosphate + H(+). Functionally, ATP-dependent RNA helicase which is a subunit of the eIF4F complex involved in cap recognition and is required for mRNA binding to ribosome. In the current model of translation initiation, eIF4A unwinds RNA secondary structures in the 5'-UTR of mRNAs which is necessary to allow efficient binding of the small ribosomal subunit, and subsequent scanning for the initiator codon. The protein is Eukaryotic initiation factor 4A-14 of Nicotiana tabacum (Common tobacco).